The chain runs to 87 residues: Large ribosomal subunit protein uL23c (87 aa).

The protein belongs to the universal ribosomal protein uL23 family. In terms of assembly, part of the 50S ribosomal subunit.

It is found in the plastid. The protein localises to the chloroplast. In terms of biological role, binds to 23S rRNA. The sequence is that of Large ribosomal subunit protein uL23c (rpl23) from Ostreococcus tauri.